The primary structure comprises 442 residues: Endothelin receptor type B (442 aa).

A signal peptide spans 1–26 (MQPPPSLCGRALVALVLACGLSRIWG). At 27-101 (EERGFPPDRA…GSIEIKETFK (75 aa)) the chain is on the extracellular side. N59 carries an N-linked (GlcNAc...) asparagine glycan. The interval 69–88 (AEVPKGDRTAGSPPRTISPP) is disordered. A helical membrane pass occupies residues 102-126 (YINTVVSCLVFVLGIIGNSTLLRII). Residues 127–137 (YKNKCMRNGPN) are Cytoplasmic-facing. A helical transmembrane segment spans residues 138–163 (ILIASLALGDLLHIIIDIPITVYKLL). The Extracellular segment spans residues 164–175 (AEDWPFGVEMCK). An intrachain disulfide couples C174 to C255. A helical transmembrane segment spans residues 176–197 (LVPFIQKASVGITVLSLCALSI). The Cytoplasmic portion of the chain corresponds to 198-218 (DRYRAVASWSRIKGIGVPKWT). Residues 219-243 (AVEIVLIWVVSVVLAVPEAVGFDMI) traverse the membrane as a helical segment. Over 244 to 271 (TIDYKGRYLRICLLHPTQKTAFMQFYKT) the chain is Extracellular. Residues 272-296 (AKDWWLFSFYFCLPLAITAFFYTLM) form a helical membrane-spanning segment. The Cytoplasmic segment spans residues 297 to 324 (TCEMLRKKSGMQIALNDHLKQRREVAKT). Position 305 is a phosphoserine (S305). Residues 325–350 (VFCLVLVFALCWLPLHLSRILKLTIY) traverse the membrane as a helical segment. At 351-362 (DQNDPNRCELLS) the chain is on the extracellular side. Residues 363-389 (FLLVLDYIGINMASLNSCINPIALYLV) traverse the membrane as a helical segment. The Cytoplasmic portion of the chain corresponds to 390–442 (SKRFKNCFKSCLCCWCQSFEEKQSLEEKQSCLKFKANDHGYDNFRSSNKYSSS). S-palmitoyl cysteine attachment occurs at residues C402, C403, and C405. S419 carries the phosphoserine modification. Y439 is modified (phosphotyrosine). A phosphoserine mark is found at S440, S441, and S442.

It belongs to the G-protein coupled receptor 1 family. Endothelin receptor subfamily. EDNRB sub-subfamily.

The protein resides in the cell membrane. Non-specific receptor for endothelin 1, 2, and 3. Mediates its action by association with G proteins that activate a phosphatidylinositol-calcium second messenger system. The chain is Endothelin receptor type B (EDNRB) from Canis lupus familiaris (Dog).